Reading from the N-terminus, the 554-residue chain is MASAAMLVPLVLVLCTAAASAAVVEHTFKVGGTKITQLCMNSVIYTANQQLPGPTIEVTEGDTLVVHAVNDSPYPLSLHWHGVYQLRSGWNDGANKITQCPIQPSGNFTYRFNITGQEGTLWWHAHSSLLRATIYGALIIKPRNGPSGYPFPEPYEEIPILLGEWWNRNVDDVENDGYLTGLGPQISDALTINGMPGDQNRCKGSAMYEVEVEYGKTCLLRIINAAVNVELFFKVAGHTFTVVAADASYTKPYATDVIVIAPGQTVDALMNTTASPGRYYMAAHVFDSKTVAVPFDQSTATGIVKYKGVPNYAPAAMPSLPPHDDVVTAGRFYWSLTGLARPSDPGVPTTVDHNMVVTFGLDQAPCAPNQTKCSGFALVAAMNRNSFQFPDQKVSLLEALYKGVPGVYSEDFPDFPPPMQGFRKATAVKKVKYNDVVEVVLQSEQYSSTLGTENHPIHLHGFDFYLLAQGLGRFNPSMKSKYNLVDPQVRNTVAVPAGGWAVIRFMANNPGMWFMHCHLDAHLPLGLAMVFEVLNGPAPNLLPPPPVDHPKCHG.

The N-terminal stretch at 1 to 21 (MASAAMLVPLVLVLCTAAASA) is a signal peptide. 2 consecutive Plastocyanin-like domains span residues 29-145 (KVGG…PRNG) and 156-309 (EEIP…YKGV). The Cu cation site is built by histidine 79 and histidine 81. N-linked (GlcNAc...) asparagine glycosylation is found at asparagine 107 and asparagine 113. Cu cation-binding residues include histidine 124 and histidine 126. Asparagine 271 and asparagine 369 each carry an N-linked (GlcNAc...) asparagine glycan. A Plastocyanin-like 3 domain is found at 411–537 (DFPDFPPPMQ…AMVFEVLNGP (127 aa)). Cu cation-binding residues include histidine 455, histidine 458, histidine 460, histidine 516, cysteine 517, histidine 518, and histidine 522.

This sequence belongs to the multicopper oxidase family. Requires Cu cation as cofactor.

Its subcellular location is the secreted. It is found in the extracellular space. The protein localises to the apoplast. It catalyses the reaction 4 hydroquinone + O2 = 4 benzosemiquinone + 2 H2O. In terms of biological role, lignin degradation and detoxification of lignin-derived products. The polypeptide is Laccase-8 (LAC8) (Oryza sativa subsp. japonica (Rice)).